We begin with the raw amino-acid sequence, 314 residues long: Cytochrome f (314 aa).

Positions 1–29 (MTRSISISVLIISVLIMIYVITRTSISNA) are cleaved as a signal peptide. Positions 30, 50, 53, and 54 each coordinate heme. The chain crosses the membrane as a helical span at residues 280–300 (VQGLLFFLASVILAQIFLVLK).

Belongs to the cytochrome f family. In terms of assembly, the 4 large subunits of the cytochrome b6-f complex are cytochrome b6, subunit IV (17 kDa polypeptide, petD), cytochrome f and the Rieske protein, while the 4 small subunits are PetG, PetL, PetM and PetN. The complex functions as a dimer. Heme serves as cofactor.

It is found in the plastid. It localises to the chloroplast thylakoid membrane. In terms of biological role, component of the cytochrome b6-f complex, which mediates electron transfer between photosystem II (PSII) and photosystem I (PSI), cyclic electron flow around PSI, and state transitions. The sequence is that of Cytochrome f from Illicium oligandrum (Star anise).